A 367-amino-acid polypeptide reads, in one-letter code: Cyclin-D3-2 (367 aa).

The span at 324 to 335 shows a compositional bias: low complexity; it reads STTASVSSSSSS. Residues 324–347 form a disordered region; the sequence is STTASVSSSSSSPEPLLKRRRVQE.

Belongs to the cyclin family. Cyclin D subfamily. As to quaternary structure, interacts with CDKA-1. As to expression, expressed in developing vegetative and floral primordia.

Its function is as follows. Promotes divisions in the guard cells (GCs) after the guard mother cells (GMC) symmetric division when in the presence of CDKA-1. The chain is Cyclin-D3-2 (CYCD3-2) from Arabidopsis thaliana (Mouse-ear cress).